The following is a 156-amino-acid chain: Small ribosomal subunit protein uS7 (156 aa).

The protein belongs to the universal ribosomal protein uS7 family. In terms of assembly, part of the 30S ribosomal subunit. Contacts proteins S9 and S11.

Functionally, one of the primary rRNA binding proteins, it binds directly to 16S rRNA where it nucleates assembly of the head domain of the 30S subunit. Is located at the subunit interface close to the decoding center, probably blocks exit of the E-site tRNA. The protein is Small ribosomal subunit protein uS7 of Acidobacterium capsulatum (strain ATCC 51196 / DSM 11244 / BCRC 80197 / JCM 7670 / NBRC 15755 / NCIMB 13165 / 161).